The sequence spans 131 residues: C-type natriuretic peptide (131 aa).

Positions 1–20 (MMCKALVFAVLLLAVPLERA) are cleaved as a signal peptide. The propeptide occupies 21–109 (DSRALRTPVD…KRALPDRAKR (89 aa)). Cysteine 115 and cysteine 131 form a disulfide bridge.

The protein belongs to the natriuretic peptide family. In terms of tissue distribution, highly expressed in brain and liver, and moderately in gut, gills and heart. Expressed to a low level in atrium, ventricle and liver of fresh water eels.

Its subcellular location is the secreted. Hormone which plays a role in endochondral ossification through regulation of cartilaginous growth plate chondrocytes proliferation and differentiation. May also be vasoactive and natriuretic. May be important for freshwater adaptation. The polypeptide is C-type natriuretic peptide (cnp) (Anguilla japonica (Japanese eel)).